Consider the following 325-residue polypeptide: Large ribosomal subunit protein uL4m (325 aa).

Residues 113–158 (ASTKTRYEVHGSHKKMSPQKGTGNARRGTRQSPLMKGGGKTFGPKP) form a disordered region.

The protein belongs to the universal ribosomal protein uL4 family. Component of the mitochondrial large ribosomal subunit (mt-LSU). Mature N.crassa 74S mitochondrial ribosomes consist of a small (37S) and a large (54S) subunit. The 37S small subunit contains a 16S ribosomal RNA (16S mt-rRNA) and 32 different proteins. The 54S large subunit contains a 23S rRNA (23S mt-rRNA) and 42 different proteins.

It is found in the mitochondrion. In terms of biological role, component of the mitochondrial ribosome (mitoribosome), a dedicated translation machinery responsible for the synthesis of mitochondrial genome-encoded proteins, including at least some of the essential transmembrane subunits of the mitochondrial respiratory chain. The mitoribosomes are attached to the mitochondrial inner membrane and translation products are cotranslationally integrated into the membrane. The sequence is that of Large ribosomal subunit protein uL4m (yml6) from Neurospora crassa (strain ATCC 24698 / 74-OR23-1A / CBS 708.71 / DSM 1257 / FGSC 987).